The sequence spans 129 residues: uncharacterized protein (129 aa).

Helical transmembrane passes span 22–42 (LASSFSNASTLLSFVFFFFFF), 55–75 (VGSFSASASAETLLDFFFFFF), and 88–108 (LPFTAASKSSGITFLVFFFFF).

It is found in the membrane. This is an uncharacterized protein from Saccharomyces cerevisiae (strain ATCC 204508 / S288c) (Baker's yeast).